Reading from the N-terminus, the 180-residue chain is NAD(P)H-quinone oxidoreductase subunit I, chloroplastic (180 aa).

4Fe-4S ferredoxin-type domains lie at 55 to 84 (GRIH…VDWR) and 95 to 124 (LNYS…MTEE). [4Fe-4S] cluster is bound by residues cysteine 64, cysteine 67, cysteine 70, cysteine 74, cysteine 104, cysteine 107, cysteine 110, and cysteine 114.

The protein belongs to the complex I 23 kDa subunit family. NDH is composed of at least 16 different subunits, 5 of which are encoded in the nucleus. [4Fe-4S] cluster is required as a cofactor.

Its subcellular location is the plastid. It is found in the chloroplast thylakoid membrane. The enzyme catalyses a plastoquinone + NADH + (n+1) H(+)(in) = a plastoquinol + NAD(+) + n H(+)(out). It catalyses the reaction a plastoquinone + NADPH + (n+1) H(+)(in) = a plastoquinol + NADP(+) + n H(+)(out). Its function is as follows. NDH shuttles electrons from NAD(P)H:plastoquinone, via FMN and iron-sulfur (Fe-S) centers, to quinones in the photosynthetic chain and possibly in a chloroplast respiratory chain. The immediate electron acceptor for the enzyme in this species is believed to be plastoquinone. Couples the redox reaction to proton translocation, and thus conserves the redox energy in a proton gradient. The polypeptide is NAD(P)H-quinone oxidoreductase subunit I, chloroplastic (Illicium oligandrum (Star anise)).